The sequence spans 462 residues: Polygalacturonase (462 aa).

An N-terminal signal peptide occupies residues 1-22 (MALTRLLLPISILWFCFYSSHT). An N-linked (GlcNAc...) asparagine glycan is attached at Asn173. Asp278 acts as the Proton donor in catalysis. Cys280 and Cys297 are oxidised to a cystine. Residue Asn294 is glycosylated (N-linked (GlcNAc...) asparagine). His301 is an active-site residue. Asn358 is a glycosylation site (N-linked (GlcNAc...) asparagine). 2 disulfide bridges follow: Cys407–Cys413 and Cys435–Cys460.

This sequence belongs to the glycosyl hydrolase 28 family.

Its subcellular location is the secreted. The protein resides in the cell wall. The enzyme catalyses (1,4-alpha-D-galacturonosyl)n+m + H2O = (1,4-alpha-D-galacturonosyl)n + (1,4-alpha-D-galacturonosyl)m.. Its function is as follows. Acts in concert with the pectinesterase, in the ripening process. Is involved in cell wall metabolism, specifically in polyuronide degradation. The polypeptide is Polygalacturonase (Persea americana (Avocado)).